Here is a 357-residue protein sequence, read N- to C-terminus: Probable cinnamyl alcohol dehydrogenase 1 (357 aa).

Residue cysteine 47 participates in Zn(2+) binding. Threonine 49 contacts NADP(+). Zn(2+) is bound by residues histidine 69, glutamate 70, cysteine 100, cysteine 103, cysteine 106, cysteine 114, and cysteine 163. Residues threonine 167, 188–193 (GLGGVG), 211–216 (SSSNKK), threonine 251, glycine 275, and 298–300 (SFI) contribute to the NADP(+) site.

This sequence belongs to the zinc-containing alcohol dehydrogenase family. Homodimer. It depends on Zn(2+) as a cofactor. Post-translationally, the N-terminus is blocked.

The enzyme catalyses (E)-cinnamyl alcohol + NADP(+) = (E)-cinnamaldehyde + NADPH + H(+). It catalyses the reaction (E)-coniferol + NADP(+) = (E)-coniferaldehyde + NADPH + H(+). The catalysed reaction is (E)-sinapyl alcohol + NADP(+) = (E)-sinapaldehyde + NADPH + H(+). It carries out the reaction (E)-4-coumaroyl alcohol + NADP(+) = (E)-4-coumaraldehyde + NADPH + H(+). The enzyme catalyses (E)-caffeyl alcohol + NADP(+) = (E)-caffeyl aldehyde + NADPH + H(+). The protein operates within aromatic compound metabolism; phenylpropanoid biosynthesis. Its function is as follows. Involved in lignin biosynthesis. Catalyzes the final step specific for the production of lignin monomers. Catalyzes the NADPH-dependent reduction of coniferaldehyde, 5-hydroxyconiferaldehyde, sinapaldehyde, 4-coumaraldehyde and caffeyl aldehyde to their respective alcohols. This chain is Probable cinnamyl alcohol dehydrogenase 1, found in Nicotiana tabacum (Common tobacco).